Reading from the N-terminus, the 264-residue chain is 3-methyl-2-oxobutanoate hydroxymethyltransferase (264 aa).

Mg(2+)-binding residues include Asp45 and Asp84. Residues 45 to 46 (DS), Asp84, and Lys112 contribute to the 3-methyl-2-oxobutanoate site. Glu114 contributes to the Mg(2+) binding site. Residue Glu181 is the Proton acceptor of the active site.

The protein belongs to the PanB family. In terms of assembly, homodecamer; pentamer of dimers. Mg(2+) serves as cofactor.

The protein resides in the cytoplasm. It carries out the reaction 3-methyl-2-oxobutanoate + (6R)-5,10-methylene-5,6,7,8-tetrahydrofolate + H2O = 2-dehydropantoate + (6S)-5,6,7,8-tetrahydrofolate. The protein operates within cofactor biosynthesis; (R)-pantothenate biosynthesis; (R)-pantoate from 3-methyl-2-oxobutanoate: step 1/2. Its function is as follows. Catalyzes the reversible reaction in which hydroxymethyl group from 5,10-methylenetetrahydrofolate is transferred onto alpha-ketoisovalerate to form ketopantoate. The sequence is that of 3-methyl-2-oxobutanoate hydroxymethyltransferase from Shewanella oneidensis (strain ATCC 700550 / JCM 31522 / CIP 106686 / LMG 19005 / NCIMB 14063 / MR-1).